A 117-amino-acid chain; its full sequence is Large ribosomal subunit protein uL18 (117 aa).

It belongs to the universal ribosomal protein uL18 family. In terms of assembly, part of the 50S ribosomal subunit; part of the 5S rRNA/L5/L18/L25 subcomplex. Contacts the 5S and 23S rRNAs.

In terms of biological role, this is one of the proteins that bind and probably mediate the attachment of the 5S RNA into the large ribosomal subunit, where it forms part of the central protuberance. This is Large ribosomal subunit protein uL18 from Acidithiobacillus ferrooxidans (strain ATCC 23270 / DSM 14882 / CIP 104768 / NCIMB 8455) (Ferrobacillus ferrooxidans (strain ATCC 23270)).